A 450-amino-acid polypeptide reads, in one-letter code: MKVIDQFKNKKVLVLGLAKSGESAARLLDKLGAIVTVNDGKPFEDNPAAQCLLEEGIKVITGGHPLELLDEEFALMVKNPGIPYNNPMIEKALAKGIPVLTEVELAYLISEAPIIGITGSNGKTTTTTMIGEVLTAAGQHGLLSGNIGYPASQVAQIATDKNTLVMELSSFQLMGVQEFHPEIAVITNLMPTHIDYHGLFEEYVAAKWNIQNKMAAADFLVLNFNQDLAKDLASKTEATVVPFSTLEKVDGAYLEDGQLYFRGEVVMAANEIGVPGSHNVENALATIAVAKLRGVDNQTIKETLSAFGGVKHRLQFVDDIKGVKFYNDSKSTNILATQKALSGFDNSKVVLIAGGLDRGNEFDELVPDITGLKKMVILGQSAERVKRAADKAGVAYVEATDIADATRKAYELATQGDVVLLSPANASWDMYANFEVRGDLFIDTVAELKE.

An ATP-binding site is contributed by 119 to 125 (GSNGKTT).

It belongs to the MurCDEF family.

The protein resides in the cytoplasm. The enzyme catalyses UDP-N-acetyl-alpha-D-muramoyl-L-alanine + D-glutamate + ATP = UDP-N-acetyl-alpha-D-muramoyl-L-alanyl-D-glutamate + ADP + phosphate + H(+). Its pathway is cell wall biogenesis; peptidoglycan biosynthesis. Cell wall formation. Catalyzes the addition of glutamate to the nucleotide precursor UDP-N-acetylmuramoyl-L-alanine (UMA). The polypeptide is UDP-N-acetylmuramoylalanine--D-glutamate ligase (Streptococcus pneumoniae (strain Taiwan19F-14)).